A 213-amino-acid chain; its full sequence is Urease accessory protein UreG (213 aa).

17–24 contacts GTP; the sequence is GPVGSGKT.

Belongs to the SIMIBI class G3E GTPase family. UreG subfamily. Homodimer. UreD, UreF and UreG form a complex that acts as a GTP-hydrolysis-dependent molecular chaperone, activating the urease apoprotein by helping to assemble the nickel containing metallocenter of UreC. The UreE protein probably delivers the nickel.

It localises to the cytoplasm. Facilitates the functional incorporation of the urease nickel metallocenter. This process requires GTP hydrolysis, probably effectuated by UreG. In Delftia acidovorans (strain DSM 14801 / SPH-1), this protein is Urease accessory protein UreG.